The sequence spans 374 residues: Chaperone protein DnaJ (374 aa).

The region spanning 6–70 (DYYDILGVSK…QKRAQYDQFG (65 aa)) is the J domain. Residues 135–217 (GKKTTIKYSR…CGGTGHTSQQ (83 aa)) form a CR-type zinc finger. Zn(2+) is bound by residues Cys148, Cys151, Cys165, Cys168, Cys191, Cys194, Cys205, and Cys208. CXXCXGXG motif repeat units follow at residues 148–155 (CKTCGGSG), 165–172 (CHKCNGTG), 191–198 (CDVCNGTG), and 205–212 (CPTCGGTG). 2 disordered regions span residues 308 to 328 (GTNF…GTGD) and 347 to 374 (EALK…KFMN).

Belongs to the DnaJ family. As to quaternary structure, homodimer. Requires Zn(2+) as cofactor.

The protein localises to the cytoplasm. In terms of biological role, participates actively in the response to hyperosmotic and heat shock by preventing the aggregation of stress-denatured proteins and by disaggregating proteins, also in an autonomous, DnaK-independent fashion. Unfolded proteins bind initially to DnaJ; upon interaction with the DnaJ-bound protein, DnaK hydrolyzes its bound ATP, resulting in the formation of a stable complex. GrpE releases ADP from DnaK; ATP binding to DnaK triggers the release of the substrate protein, thus completing the reaction cycle. Several rounds of ATP-dependent interactions between DnaJ, DnaK and GrpE are required for fully efficient folding. Also involved, together with DnaK and GrpE, in the DNA replication of plasmids through activation of initiation proteins. The chain is Chaperone protein DnaJ from Pediococcus pentosaceus (strain ATCC 25745 / CCUG 21536 / LMG 10740 / 183-1w).